The primary structure comprises 330 residues: ADP-L-glycero-D-manno-heptose-6-epimerase (330 aa).

Residues 11-12 (FI), 32-33 (DN), K39, K54, 75-79 (EGACS), and N92 contribute to the NADP(+) site. Y139 acts as the Proton acceptor in catalysis. Position 143 (K143) interacts with NADP(+). N168 lines the substrate pocket. 2 residues coordinate NADP(+): V169 and K177. The active-site Proton acceptor is K177. Residues R179, H186, 200–203 (FGEY), R213, and Y292 contribute to the substrate site.

The protein belongs to the NAD(P)-dependent epimerase/dehydratase family. HldD subfamily. As to quaternary structure, homopentamer. NADP(+) is required as a cofactor.

The catalysed reaction is ADP-D-glycero-beta-D-manno-heptose = ADP-L-glycero-beta-D-manno-heptose. Its pathway is nucleotide-sugar biosynthesis; ADP-L-glycero-beta-D-manno-heptose biosynthesis; ADP-L-glycero-beta-D-manno-heptose from D-glycero-beta-D-manno-heptose 7-phosphate: step 4/4. Its function is as follows. Catalyzes the interconversion between ADP-D-glycero-beta-D-manno-heptose and ADP-L-glycero-beta-D-manno-heptose via an epimerization at carbon 6 of the heptose. The polypeptide is ADP-L-glycero-D-manno-heptose-6-epimerase (Burkholderia ambifaria (strain ATCC BAA-244 / DSM 16087 / CCUG 44356 / LMG 19182 / AMMD) (Burkholderia cepacia (strain AMMD))).